Reading from the N-terminus, the 165-residue chain is Chorismate pyruvate-lyase (165 aa).

Positions 35, 77, 115, and 156 each coordinate substrate.

Belongs to the UbiC family. In terms of assembly, monomer.

The protein localises to the cytoplasm. It catalyses the reaction chorismate = 4-hydroxybenzoate + pyruvate. It participates in cofactor biosynthesis; ubiquinone biosynthesis. Functionally, removes the pyruvyl group from chorismate, with concomitant aromatization of the ring, to provide 4-hydroxybenzoate (4HB) for the ubiquinone pathway. The polypeptide is Chorismate pyruvate-lyase (Salmonella enteritidis PT4 (strain P125109)).